We begin with the raw amino-acid sequence, 316 residues long: Ribose-phosphate pyrophosphokinase (316 aa).

Residues 39 to 41 (DGE) and 98 to 99 (RQ) each bind ATP. Residues histidine 133 and aspartate 172 each coordinate Mg(2+). Residue lysine 195 is part of the active site. Residues arginine 197, aspartate 221, and 225–229 (DTANT) contribute to the D-ribose 5-phosphate site.

It belongs to the ribose-phosphate pyrophosphokinase family. Class I subfamily. In terms of assembly, homohexamer. It depends on Mg(2+) as a cofactor.

Its subcellular location is the cytoplasm. The catalysed reaction is D-ribose 5-phosphate + ATP = 5-phospho-alpha-D-ribose 1-diphosphate + AMP + H(+). The protein operates within metabolic intermediate biosynthesis; 5-phospho-alpha-D-ribose 1-diphosphate biosynthesis; 5-phospho-alpha-D-ribose 1-diphosphate from D-ribose 5-phosphate (route I): step 1/1. Its function is as follows. Involved in the biosynthesis of the central metabolite phospho-alpha-D-ribosyl-1-pyrophosphate (PRPP) via the transfer of pyrophosphoryl group from ATP to 1-hydroxyl of ribose-5-phosphate (Rib-5-P). In Nitrosomonas europaea (strain ATCC 19718 / CIP 103999 / KCTC 2705 / NBRC 14298), this protein is Ribose-phosphate pyrophosphokinase.